The following is a 391-amino-acid chain: MSNLNLHNKRVMIREDLNVPMKNGKITNDERIVRALPTIQKAIEQKARVMILSHLGRPEEGKFEKEFSLAPVARLLSKKLNQKVPLINDWLKGVAVEPGQAILCENVRFNKGENENNTELAKRMAELCDIFVMDAFATAHRAQASTAGVAAYAKLACAGPLLISEVEALSRALENPQKPLVAVVGGSKVSTKIHLLENLLDKVDQLIVGGGIANTFLKAQGYSIGKSLCENEWLDAAQQFWEKAAEKNVSLPLPVDVIVADELSEDAKATVKNIDAVTSNESIFDVGPNTSATYAKLMAQAGTIVWNGPIGVFEIEAFSQGTRALAQAVAKSTAYSIVGGGDTLAALDKFNLTDQMSYVSTAGGAFLEFLEGKILPAIKILTQRAKEYEQK.

Residues 16–18 (DLN), Arg-31, 54–57 (HLGR), Arg-108, and Arg-141 each bind substrate. ATP is bound by residues Lys-192, Glu-314, and 340 to 343 (GGDT).

Belongs to the phosphoglycerate kinase family. Monomer.

It is found in the cytoplasm. It carries out the reaction (2R)-3-phosphoglycerate + ATP = (2R)-3-phospho-glyceroyl phosphate + ADP. The protein operates within carbohydrate degradation; glycolysis; pyruvate from D-glyceraldehyde 3-phosphate: step 2/5. In Coxiella burnetii (strain RSA 493 / Nine Mile phase I), this protein is Phosphoglycerate kinase.